A 394-amino-acid chain; its full sequence is Flavohemoprotein (394 aa).

The Globin domain maps to 1–136; it reads MLSENTINIV…LANVFIQREE (136 aa). Position 85 (histidine 85) interacts with heme b. Residues tyrosine 95 and glutamate 135 each act as charge relay system in the active site. The interval 147–394 is reductase; it reads GGWRGLREFE…YECFGPHKVV (248 aa). The region spanning 150-255 is the FAD-binding FR-type domain; it reads RGLREFELVE…AAPAGDFFLD (106 aa). FAD contacts are provided by residues tyrosine 188 and 204-207; that span reads RQYS. NADP(+) is bound at residue 268–273; sequence GVGLTP. 387-390 contacts FAD; the sequence is CFGP.

Belongs to the globin family. Two-domain flavohemoproteins subfamily. It in the C-terminal section; belongs to the flavoprotein pyridine nucleotide cytochrome reductase family. The cofactor is heme b. FAD is required as a cofactor.

It carries out the reaction 2 nitric oxide + NADPH + 2 O2 = 2 nitrate + NADP(+) + H(+). The enzyme catalyses 2 nitric oxide + NADH + 2 O2 = 2 nitrate + NAD(+) + H(+). Is involved in NO detoxification in an aerobic process, termed nitric oxide dioxygenase (NOD) reaction that utilizes O(2) and NAD(P)H to convert NO to nitrate, which protects the bacterium from various noxious nitrogen compounds. Therefore, plays a central role in the inducible response to nitrosative stress. This chain is Flavohemoprotein, found in Vibrio vulnificus (strain YJ016).